Consider the following 282-residue polypeptide: 4-diphosphocytidyl-2-C-methyl-D-erythritol kinase (282 aa).

K12 is a catalytic residue. ATP is bound at residue 95–105 (PMGGGIGGGSS). D137 is an active-site residue.

Belongs to the GHMP kinase family. IspE subfamily.

It catalyses the reaction 4-CDP-2-C-methyl-D-erythritol + ATP = 4-CDP-2-C-methyl-D-erythritol 2-phosphate + ADP + H(+). It participates in isoprenoid biosynthesis; isopentenyl diphosphate biosynthesis via DXP pathway; isopentenyl diphosphate from 1-deoxy-D-xylulose 5-phosphate: step 3/6. In terms of biological role, catalyzes the phosphorylation of the position 2 hydroxy group of 4-diphosphocytidyl-2C-methyl-D-erythritol. The sequence is that of 4-diphosphocytidyl-2-C-methyl-D-erythritol kinase from Pseudomonas aeruginosa (strain LESB58).